We begin with the raw amino-acid sequence, 500 residues long: Protein psiE (500 aa).

The signal sequence occupies residues 1-18 (MKLISVLITFLLATVIYS). Residue Asn-59 is glycosylated (N-linked (GlcNAc...) asparagine). Positions 114-256 (TYDTTRKIYV…KDYCGVCQGD (143 aa)) constitute a PA14 domain. 5 N-linked (GlcNAc...) asparagine glycosylation sites follow: Asn-314, Asn-341, Asn-366, Asn-420, and Asn-469.

It belongs to the prespore-cell-inducing factor family.

It localises to the secreted. The polypeptide is Protein psiE (psiE) (Dictyostelium discoideum (Social amoeba)).